Reading from the N-terminus, the 189-residue chain is UPF0301 protein Plut_0637 (189 aa).

This sequence belongs to the UPF0301 (AlgH) family.

This chain is UPF0301 protein Plut_0637, found in Chlorobium luteolum (strain DSM 273 / BCRC 81028 / 2530) (Pelodictyon luteolum).